The sequence spans 495 residues: Aspartyl/glutamyl-tRNA(Asn/Gln) amidotransferase subunit B (495 aa).

It belongs to the GatB/GatE family. GatB subfamily. As to quaternary structure, heterotrimer of A, B and C subunits.

It catalyses the reaction L-glutamyl-tRNA(Gln) + L-glutamine + ATP + H2O = L-glutaminyl-tRNA(Gln) + L-glutamate + ADP + phosphate + H(+). The catalysed reaction is L-aspartyl-tRNA(Asn) + L-glutamine + ATP + H2O = L-asparaginyl-tRNA(Asn) + L-glutamate + ADP + phosphate + 2 H(+). Its function is as follows. Allows the formation of correctly charged Asn-tRNA(Asn) or Gln-tRNA(Gln) through the transamidation of misacylated Asp-tRNA(Asn) or Glu-tRNA(Gln) in organisms which lack either or both of asparaginyl-tRNA or glutaminyl-tRNA synthetases. The reaction takes place in the presence of glutamine and ATP through an activated phospho-Asp-tRNA(Asn) or phospho-Glu-tRNA(Gln). The chain is Aspartyl/glutamyl-tRNA(Asn/Gln) amidotransferase subunit B from Methanosarcina acetivorans (strain ATCC 35395 / DSM 2834 / JCM 12185 / C2A).